A 665-amino-acid chain; its full sequence is Pentatricopeptide repeat-containing protein At3g02490, mitochondrial (665 aa).

A mitochondrion-targeting transit peptide spans 1-37 (MRYQWRSLLFRSYRSSPRPFLSHHSRFQVISNSTRSF). PPR repeat units lie at residues 280 to 314 (DEKT…GYEM), 315 to 349 (EMET…SISN), 352 to 388 (TPHC…GNVV), 389 to 423 (PDVM…GYVP), 424 to 458 (SGDL…GNHL), 459 to 493 (DDKA…EGVS), 495 to 530 (AGYA…QLKP), and 536 to 570 (KIMV…GFPP).

The protein belongs to the PPR family. P subfamily.

The protein localises to the mitochondrion. The polypeptide is Pentatricopeptide repeat-containing protein At3g02490, mitochondrial (Arabidopsis thaliana (Mouse-ear cress)).